Consider the following 123-residue polypeptide: Alpha-lactalbumin A (123 aa).

Positions 1-123 (KQFTKCELSQ…KLEQWLCEEL (123 aa)) constitute a C-type lysozyme domain. Intrachain disulfides connect Cys6/Cys120, Cys28/Cys111, Cys61/Cys77, and Cys73/Cys91. Residues Lys79, Asp82, Asp84, Asp87, and Asp88 each contribute to the Ca(2+) site.

The protein belongs to the glycosyl hydrolase 22 family. In terms of assembly, lactose synthase (LS) is a heterodimer of a catalytic component, beta1,4-galactosyltransferase (beta4Gal-T1) and a regulatory component, alpha-lactalbumin (LA). In terms of tissue distribution, mammary gland specific. Secreted in milk.

It is found in the secreted. Regulatory subunit of lactose synthase, changes the substrate specificity of galactosyltransferase in the mammary gland making glucose a good acceptor substrate for this enzyme. This enables LS to synthesize lactose, the major carbohydrate component of milk. In other tissues, galactosyltransferase transfers galactose onto the N-acetylglucosamine of the oligosaccharide chains in glycoproteins. The chain is Alpha-lactalbumin A from Equus caballus (Horse).